We begin with the raw amino-acid sequence, 616 residues long: MVGQLSEGAIAAIMQKGDTNIKPILQVINIRPITTGNSPPRYRLLMSDGLNTLSSFMLATQLNPLVEEEQLSSNCVCQIHRFIVNTLKDGRRVVILMELEVLKSAEAVGVKIGNPVPYNEGLGQPQVAPPAPAASPAASSRPQPQNGSSGMGSTVSKAYGASKTFGKAAGPSLSHTSGGTQSKVVPIASLTPYQSKWTICARVTNKSQIRTWSNSRGEGKLFSLELVDESGEIRATAFNEQVDKFFPLIEVNKVYYFSKGTLKIANKQFTAVKNDYEMTFNNETSVMPCEDDHHLPTVQFDFTGIDDLENKSKDSLVDIIGICKSYEDATKITVRSNNREVAKRNIYLMDTSGKVVTATLWGEDADKFDGSRQPVLAIKGARVSDFGGRSLSVLSSSTIIANPDIPEAYKLRGWFDAEGQALDGVSISDLKSGGVGGSNTNWKTLYEVKSENLGQGDKPDYFSSVATVVYLRKENCMYQACPTQDCNKKVIDQQNGLYRCEKCDTEFPNFKYRMILSVNIADFQENQWVTCFQESAEAILGQNAAYLGELKDKNEQAFEEVFQNANFRSFIFRVRVKVETYNDESRIKATVMDVKPVDYREYGRRLVMSIRRSALM.

Position 1 is an N-acetylmethionine (M1). Residues K22 and K88 each participate in a glycyl lysine isopeptide (Lys-Gly) (interchain with G-Cter in ubiquitin) cross-link. The segment at 121–154 is disordered; sequence GLGQPQVAPPAPAASPAASSRPQPQNGSSGMGST. Low complexity predominate over residues 134–145; it reads ASPAASSRPQPQ. An N6-acetyllysine; alternate mark is found at K163 and K167. Glycyl lysine isopeptide (Lys-Gly) (interchain with G-Cter in ubiquitin); alternate cross-links involve residues K163 and K167. Phosphothreonine is present on T180. Residue K183 forms a Glycyl lysine isopeptide (Lys-Gly) (interchain with G-Cter in ubiquitin) linkage. T191 is subject to Phosphothreonine. A DNA-binding region (OB) is located at residues 197–281; that stretch reads WTICARVTNK…VKNDYEMTFN (85 aa). Residues K220 and K244 each participate in a glycyl lysine isopeptide (Lys-Gly) (interchain with G-Cter in ubiquitin) cross-link. Position 259 is an N6-acetyllysine; alternate (K259). K259 participates in a covalent cross-link: Glycyl lysine isopeptide (Lys-Gly) (interchain with G-Cter in ubiquitin); alternate. Glycyl lysine isopeptide (Lys-Gly) (interchain with G-Cter in ubiquitin) cross-links involve residues K267 and K331. S384 is subject to Phosphoserine. Residues K410 and K431 each participate in a glycyl lysine isopeptide (Lys-Gly) (interchain with G-Cter in ubiquitin) cross-link. K449 participates in a covalent cross-link: Glycyl lysine isopeptide (Lys-Gly) (interchain with G-Cter in SUMO). K458 participates in a covalent cross-link: Glycyl lysine isopeptide (Lys-Gly) (interchain with G-Cter in ubiquitin). A C4-type zinc finger spans residues 481–503; the sequence is CPTQDCNKKVIDQQNGLYRCEKC. K553 is covalently cross-linked (Glycyl lysine isopeptide (Lys-Gly) (interchain with G-Cter in ubiquitin)). K577 is covalently cross-linked (Glycyl lysine isopeptide (Lys-Gly) (interchain with G-Cter in SUMO)).

It belongs to the replication factor A protein 1 family. In terms of assembly, component of the canonical replication protein A complex (RPA), a heterotrimer composed of RPA1, RPA2 and RPA3. Also a component of the aRPA, the alternative replication protein A complex, a trimeric complex similar to the replication protein A complex/RPA but where RPA1 and RPA3 are associated with RPA4 instead of RPA2. The DNA-binding activity may reside exclusively on the RPA1 subunit. Interacts with PRPF19; the PRP19-CDC5L complex is recruited to the sites of DNA repair where it ubiquitinates the replication protein A complex (RPA). Interacts with RIPK1. Interacts with the polymerase alpha subunit POLA1/p180; this interaction stabilizes the replicative complex and reduces the misincorporation rate of DNA polymerase alpha by acting as a fidelity clamp. Interacts with RAD51 and SENP6 to regulate DNA repair. Interacts with HELB; this interaction promotes HELB recruitment to chromatin following DNA damage. Interacts with PRIMPOL; leading to recruit PRIMPOL on chromatin and stimulate its DNA primase activity. Interacts with XPA; the interaction is direct and associates XPA with the RPA complex. Interacts with ETAA1; the interaction is direct and promotes ETAA1 recruitment at stalled replication forks. Interacts with RPA1; this interaction associates HROB with the RPA complex. Interacts (when poly-ADP-ribosylated) with HTATSF1. Interacts with BRIP1/FANCJ via this RPA1 subunit; following DNA damage they colocalize in foci in the nucleus. DNA damage-induced 'Lys-63'-linked polyubiquitination by PRPF19 mediates ATRIP recruitment to the RPA complex at sites of DNA damage and activation of ATR. Ubiquitinated by RFWD3 at stalled replication forks in response to DNA damage: ubiquitination by RFWD3 does not lead to degradation by the proteasome and promotes removal of the RPA complex from stalled replication forks, promoting homologous recombination. In terms of processing, sumoylated on lysine residues Lys-449 and Lys-577, with Lys-449 being the major site. Sumoylation promotes recruitment of RAD51 to the DNA damage foci to initiate DNA repair through homologous recombination. Desumoylated by SENP6. Post-translationally, poly-ADP-ribosylated by PARP1; promoting recruitment of HTATSF1.

It localises to the nucleus. The protein localises to the PML body. Functionally, as part of the heterotrimeric replication protein A complex (RPA/RP-A), binds and stabilizes single-stranded DNA intermediates that form during DNA replication or upon DNA stress. It prevents their reannealing and in parallel, recruits and activates different proteins and complexes involved in DNA metabolism. Thereby, it plays an essential role both in DNA replication and the cellular response to DNA damage. In the cellular response to DNA damage, the RPA complex controls DNA repair and DNA damage checkpoint activation. Through recruitment of ATRIP activates the ATR kinase a master regulator of the DNA damage response. It is required for the recruitment of the DNA double-strand break repair factors RAD51 and RAD52 to chromatin in response to DNA damage. Also recruits to sites of DNA damage proteins like XPA and XPG that are involved in nucleotide excision repair and is required for this mechanism of DNA repair. Also plays a role in base excision repair (BER) probably through interaction with UNG. Also recruits SMARCAL1/HARP, which is involved in replication fork restart, to sites of DNA damage. Plays a role in telomere maintenance. As part of the alternative replication protein A complex, aRPA, binds single-stranded DNA and probably plays a role in DNA repair. Compared to the RPA2-containing, canonical RPA complex, may not support chromosomal DNA replication and cell cycle progression through S-phase. The aRPA may not promote efficient priming by DNA polymerase alpha but could support DNA synthesis by polymerase delta in presence of PCNA and replication factor C (RFC), the dual incision/excision reaction of nucleotide excision repair and RAD51-dependent strand exchange. RPA stimulates 5'-3' helicase activity of the BRIP1/FANCJ. The protein is Replication protein A 70 kDa DNA-binding subunit (RPA1) of Homo sapiens (Human).